The chain runs to 234 residues: Hydrolase in agr operon (234 aa).

Positions 1-212 (ILYNKDTDVV…EKELTVTIDI (212 aa)) constitute a CN hydrolase domain. Glu14 serves as the catalytic Proton acceptor. Lys83 acts as the Proton donor in catalysis. The active-site Nucleophile is Cys119.

Belongs to the carbon-nitrogen hydrolase superfamily. NIT1/NIT2 family.

This chain is Hydrolase in agr operon, found in Staphylococcus lugdunensis.